The primary structure comprises 428 residues: Enolase (428 aa).

Q163 is a (2R)-2-phosphoglycerate binding site. The active-site Proton donor is the E205. Mg(2+)-binding residues include D242, E285, and D312. Residues K337, R366, S367, and K388 each coordinate (2R)-2-phosphoglycerate. Catalysis depends on K337, which acts as the Proton acceptor.

Belongs to the enolase family. The cofactor is Mg(2+).

Its subcellular location is the cytoplasm. The protein localises to the secreted. It localises to the cell surface. The catalysed reaction is (2R)-2-phosphoglycerate = phosphoenolpyruvate + H2O. It participates in carbohydrate degradation; glycolysis; pyruvate from D-glyceraldehyde 3-phosphate: step 4/5. In terms of biological role, catalyzes the reversible conversion of 2-phosphoglycerate (2-PG) into phosphoenolpyruvate (PEP). It is essential for the degradation of carbohydrates via glycolysis. In Persephonella marina (strain DSM 14350 / EX-H1), this protein is Enolase.